The sequence spans 174 residues: ATP-dependent protease subunit HslV (174 aa).

Residue threonine 2 is part of the active site. Glycine 157, cysteine 160, and threonine 163 together coordinate Na(+).

This sequence belongs to the peptidase T1B family. HslV subfamily. In terms of assembly, a double ring-shaped homohexamer of HslV is capped on each side by a ring-shaped HslU homohexamer. The assembly of the HslU/HslV complex is dependent on binding of ATP.

Its subcellular location is the cytoplasm. It catalyses the reaction ATP-dependent cleavage of peptide bonds with broad specificity.. Its activity is regulated as follows. Allosterically activated by HslU binding. Protease subunit of a proteasome-like degradation complex believed to be a general protein degrading machinery. The polypeptide is ATP-dependent protease subunit HslV (Shewanella putrefaciens (strain CN-32 / ATCC BAA-453)).